Consider the following 355-residue polypeptide: UDP-N-acetylglucosamine--N-acetylmuramyl-(pentapeptide) pyrophosphoryl-undecaprenol N-acetylglucosamine transferase (355 aa).

Residues threonine 15–glycine 17, asparagine 127, arginine 163, serine 191, isoleucine 244, alanine 263–glutamate 268, and glutamine 288 each bind UDP-N-acetyl-alpha-D-glucosamine.

This sequence belongs to the glycosyltransferase 28 family. MurG subfamily.

The protein resides in the cell inner membrane. It carries out the reaction di-trans,octa-cis-undecaprenyl diphospho-N-acetyl-alpha-D-muramoyl-L-alanyl-D-glutamyl-meso-2,6-diaminopimeloyl-D-alanyl-D-alanine + UDP-N-acetyl-alpha-D-glucosamine = di-trans,octa-cis-undecaprenyl diphospho-[N-acetyl-alpha-D-glucosaminyl-(1-&gt;4)]-N-acetyl-alpha-D-muramoyl-L-alanyl-D-glutamyl-meso-2,6-diaminopimeloyl-D-alanyl-D-alanine + UDP + H(+). Its pathway is cell wall biogenesis; peptidoglycan biosynthesis. Its function is as follows. Cell wall formation. Catalyzes the transfer of a GlcNAc subunit on undecaprenyl-pyrophosphoryl-MurNAc-pentapeptide (lipid intermediate I) to form undecaprenyl-pyrophosphoryl-MurNAc-(pentapeptide)GlcNAc (lipid intermediate II). This is UDP-N-acetylglucosamine--N-acetylmuramyl-(pentapeptide) pyrophosphoryl-undecaprenol N-acetylglucosamine transferase from Salmonella dublin (strain CT_02021853).